Here is a 134-residue protein sequence, read N- to C-terminus: Small ribosomal subunit protein uS9 (134 aa).

Residues 109-134 are disordered; that stretch reads DARRTEPHKPSKSSKGPRAKRQKSYR. Residues 118–134 are compositionally biased toward basic residues; that stretch reads PSKSSKGPRAKRQKSYR.

This sequence belongs to the universal ribosomal protein uS9 family.

The protein is Small ribosomal subunit protein uS9 of Methanococcus maripaludis (strain DSM 14266 / JCM 13030 / NBRC 101832 / S2 / LL).